The primary structure comprises 240 residues: Sialidase 85-1.2 (240 aa).

Over residues 127–142 (DDDDGGDDDDEEDSQE) the composition is skewed to acidic residues. 2 disordered regions span residues 127–158 (DDDD…GKKP) and 221–240 (HRGG…QRDA). The span at 144 to 155 (SSPKESSPEKIG) shows a compositional bias: basic and acidic residues.

It belongs to the glycosyl hydrolase 33 family.

The enzyme catalyses Hydrolysis of alpha-(2-&gt;3)-, alpha-(2-&gt;6)-, alpha-(2-&gt;8)- glycosidic linkages of terminal sialic acid residues in oligosaccharides, glycoproteins, glycolipids, colominic acid and synthetic substrates.. Its function is as follows. Developmentally regulated neuraminidase implicated in parasite invasion of cells. May contribute to the pathology during T.cruzi infection by cleaving sialic acid from cells of the immune system. In Trypanosoma cruzi, this protein is Sialidase 85-1.2 (SA85-1.2).